We begin with the raw amino-acid sequence, 203 residues long: Ribosomal RNA small subunit methyltransferase G (203 aa).

S-adenosyl-L-methionine-binding positions include Gly-73, Leu-78, Val-124 to Glu-125, and Arg-138.

This sequence belongs to the methyltransferase superfamily. RNA methyltransferase RsmG family.

It is found in the cytoplasm. It carries out the reaction guanosine(527) in 16S rRNA + S-adenosyl-L-methionine = N(7)-methylguanosine(527) in 16S rRNA + S-adenosyl-L-homocysteine. Functionally, specifically methylates the N7 position of guanine in position 527 of 16S rRNA. This Glaesserella parasuis serovar 5 (strain SH0165) (Haemophilus parasuis) protein is Ribosomal RNA small subunit methyltransferase G.